A 20-amino-acid chain; its full sequence is Thylakoid lumenal 20 kDa protein (20 aa).

The tract at residues 1–20 (RDVDVGSFLPKSPSDPSMVL) is disordered.

The protein resides in the plastid. It localises to the chloroplast thylakoid lumen. The protein is Thylakoid lumenal 20 kDa protein of Spinacia oleracea (Spinach).